The following is a 321-amino-acid chain: 4-hydroxy-3-methylbut-2-enyl diphosphate reductase (321 aa).

Cys-12 is a [4Fe-4S] cluster binding site. 2 residues coordinate (2E)-4-hydroxy-3-methylbut-2-enyl diphosphate: His-41 and His-74. His-41 and His-74 together coordinate dimethylallyl diphosphate. The isopentenyl diphosphate site is built by His-41 and His-74. Cys-96 contacts [4Fe-4S] cluster. His-124 lines the (2E)-4-hydroxy-3-methylbut-2-enyl diphosphate pocket. A dimethylallyl diphosphate-binding site is contributed by His-124. His-124 is a binding site for isopentenyl diphosphate. The active-site Proton donor is Glu-126. Residue Thr-167 participates in (2E)-4-hydroxy-3-methylbut-2-enyl diphosphate binding. Cys-197 contacts [4Fe-4S] cluster. (2E)-4-hydroxy-3-methylbut-2-enyl diphosphate-binding residues include Ser-225, Ser-226, Asn-227, and Ser-269. Positions 225, 226, 227, and 269 each coordinate dimethylallyl diphosphate. Ser-225, Ser-226, Asn-227, and Ser-269 together coordinate isopentenyl diphosphate.

This sequence belongs to the IspH family. In terms of assembly, homodimer. Requires [4Fe-4S] cluster as cofactor.

The catalysed reaction is isopentenyl diphosphate + 2 oxidized [2Fe-2S]-[ferredoxin] + H2O = (2E)-4-hydroxy-3-methylbut-2-enyl diphosphate + 2 reduced [2Fe-2S]-[ferredoxin] + 2 H(+). It carries out the reaction dimethylallyl diphosphate + 2 oxidized [2Fe-2S]-[ferredoxin] + H2O = (2E)-4-hydroxy-3-methylbut-2-enyl diphosphate + 2 reduced [2Fe-2S]-[ferredoxin] + 2 H(+). The protein operates within isoprenoid biosynthesis; dimethylallyl diphosphate biosynthesis; dimethylallyl diphosphate from (2E)-4-hydroxy-3-methylbutenyl diphosphate: step 1/1. Its pathway is isoprenoid biosynthesis; isopentenyl diphosphate biosynthesis via DXP pathway; isopentenyl diphosphate from 1-deoxy-D-xylulose 5-phosphate: step 6/6. Functionally, catalyzes the conversion of 1-hydroxy-2-methyl-2-(E)-butenyl 4-diphosphate (HMBPP) into a mixture of isopentenyl diphosphate (IPP) and dimethylallyl diphosphate (DMAPP). Acts in the terminal step of the DOXP/MEP pathway for isoprenoid precursor biosynthesis. The polypeptide is 4-hydroxy-3-methylbut-2-enyl diphosphate reductase (Escherichia coli O6:K15:H31 (strain 536 / UPEC)).